The sequence spans 176 residues: Nucleoside triphosphate/diphosphate phosphatase (176 aa).

The active-site Proton donor is the arginine 23. 6 residues coordinate Mg(2+): asparagine 87, aspartate 103, aspartate 105, aspartate 107, aspartate 120, and glutamate 123.

It belongs to the Ntdp family. Mg(2+) serves as cofactor.

It catalyses the reaction a ribonucleoside 5'-triphosphate + H2O = a ribonucleoside 5'-diphosphate + phosphate + H(+). It carries out the reaction a ribonucleoside 5'-diphosphate + H2O = a ribonucleoside 5'-phosphate + phosphate + H(+). Has nucleoside phosphatase activity towards nucleoside triphosphates and nucleoside diphosphates. The chain is Nucleoside triphosphate/diphosphate phosphatase (yjjG) from Lactococcus lactis subsp. lactis (strain IL1403) (Streptococcus lactis).